The following is a 1222-amino-acid chain: Deubiquitinating protein VCPIP1 (1222 aa).

Residues 1-21 (MSQPPPPPPPLPPPPPPPEAP) show a composition bias toward pro residues. The tract at residues 1–36 (MSQPPPPPPPLPPPPPPPEAPQTPSSLASAAASGGL) is disordered. The span at 25–36 (SSLASAAASGGL) shows a compositional bias: low complexity. Positions 208–361 (LIPVHVDGDG…RNHYIPLVGI (154 aa)) constitute an OTU domain. Asp216 is a catalytic residue. Cys219 acts as the Nucleophile in catalysis. The active site involves His354. Lys408 is subject to N6-acetyllysine. Disordered stretches follow at residues 725–776 (SVMQ…KEKK), 989–1009 (EATTRSRESSPSHGLLKLGSG), and 1024–1074 (AFQG…VFTA). Residues Ser747 and Ser757 each carry the phosphoserine modification. Residues 755–771 (PSSAPATPTKAPYSPTT) are compositionally biased toward low complexity. The residue at position 763 (Thr763) is a Phosphothreonine. 3 positions are modified to phosphoserine: Ser768, Ser994, and Ser998. A compositionally biased stretch (basic and acidic residues) spans 1041–1050 (LDPRARETSV). Polar residues predominate over residues 1057–1074 (GTDFSNSSTKTEPSVFTA). Ser1077 is modified (phosphoserine). 2 disordered regions span residues 1113 to 1175 (VSSI…TETT) and 1188 to 1222 (ATRSKAQRGNSVEELEEMDSQDAEMTNTTEPMDHS). Polar residues predominate over residues 1143–1157 (VVSSSAKSGSLQTGL). The span at 1163 to 1175 (LTGGTENLNTETT) shows a compositional bias: low complexity. Ser1198 is subject to Phosphoserine. Acidic residues predominate over residues 1200–1209 (EELEEMDSQD). Phosphoserine; by ATM is present on Ser1207. The span at 1210 to 1222 (AEMTNTTEPMDHS) shows a compositional bias: polar residues.

As to quaternary structure, binds VCP and the ternary complex containing STX5A, NSFL1C and VCP. Post-translationally, phosphorylated at Ser-1207 by ATM or ATR following induction of covalent DNA-protein cross-links (DPCs).

The protein localises to the nucleus. It is found in the cytoplasm. Its subcellular location is the endoplasmic reticulum. The protein resides in the golgi apparatus. It localises to the golgi stack. The catalysed reaction is Thiol-dependent hydrolysis of ester, thioester, amide, peptide and isopeptide bonds formed by the C-terminal Gly of ubiquitin (a 76-residue protein attached to proteins as an intracellular targeting signal).. In terms of biological role, deubiquitinating enzyme involved in DNA repair and reassembly of the Golgi apparatus and the endoplasmic reticulum following mitosis. Necessary for VCP-mediated reassembly of Golgi stacks after mitosis. Plays a role in VCP-mediated formation of transitional endoplasmic reticulum (tER). Mediates dissociation of the ternary complex containing STX5A, NSFL1C and VCP. Also involved in DNA repair following phosphorylation by ATM or ATR: acts by catalyzing deubiquitination of SPRTN, thereby promoting SPRTN recruitment to chromatin and subsequent proteolytic cleavage of covalent DNA-protein cross-links (DPCs). Hydrolyzes 'Lys-11'- and 'Lys-48'-linked polyubiquitin chains. (Microbial infection) Regulates the duration of C.botulinum neurotoxin type A (BoNT/A) intoxication by catalyzing deubiquitination of Botulinum neurotoxin A light chain (LC), thereby preventing LC degradation by the proteasome, and accelerating botulinum neurotoxin intoxication in patients. This Homo sapiens (Human) protein is Deubiquitinating protein VCPIP1.